Consider the following 540-residue polypeptide: 2-isopropylmalate synthase (540 aa).

In terms of domain architecture, Pyruvate carboxyltransferase spans 8-271 (VLIFDTTLRD…NPFFGREEDS (264 aa)). Mn(2+) is bound by residues aspartate 17, histidine 208, histidine 210, and asparagine 244. Residues 408–540 (QLKLVQVSCG…PVVLESRPTL (133 aa)) form a regulatory domain region.

Belongs to the alpha-IPM synthase/homocitrate synthase family. LeuA type 1 subfamily. In terms of assembly, homodimer. Mn(2+) is required as a cofactor.

The protein resides in the cytoplasm. The catalysed reaction is 3-methyl-2-oxobutanoate + acetyl-CoA + H2O = (2S)-2-isopropylmalate + CoA + H(+). It participates in amino-acid biosynthesis; L-leucine biosynthesis; L-leucine from 3-methyl-2-oxobutanoate: step 1/4. Its function is as follows. Catalyzes the condensation of the acetyl group of acetyl-CoA with 3-methyl-2-oxobutanoate (2-ketoisovalerate) to form 3-carboxy-3-hydroxy-4-methylpentanoate (2-isopropylmalate). This is 2-isopropylmalate synthase from Synechococcus sp. (strain CC9605).